Here is a 235-residue protein sequence, read N- to C-terminus: MSSADGALVLFSGGQDSTTCVAWALKRYAKVETIGFDYGQRHAVELEVRPDVLRSLRDINPEWNKKLGEDHMIDLSLISKISNTAMTQDVEITMMENGLPNTFVPGRNLLFMTVAATVAYRRGLDVLVGGMCETDFSGYPDCRDDTMKALQVALNLGMATRLKLETPLMWIDKAETWKMAQDLGGKPLVDLIRAGTHTCYLGERGALHDWGYGCGTCPACELRARGYANFAAQEK.

Position 11-21 (phenylalanine 11–valine 21) interacts with ATP. Zn(2+) contacts are provided by cysteine 199, cysteine 214, cysteine 217, and cysteine 220.

This sequence belongs to the QueC family. Zn(2+) serves as cofactor.

It catalyses the reaction 7-carboxy-7-deazaguanine + NH4(+) + ATP = 7-cyano-7-deazaguanine + ADP + phosphate + H2O + H(+). It participates in purine metabolism; 7-cyano-7-deazaguanine biosynthesis. Functionally, catalyzes the ATP-dependent conversion of 7-carboxy-7-deazaguanine (CDG) to 7-cyano-7-deazaguanine (preQ(0)). This chain is 7-cyano-7-deazaguanine synthase, found in Janthinobacterium sp. (strain Marseille) (Minibacterium massiliensis).